Here is a 190-residue protein sequence, read N- to C-terminus: Elongation factor P-like protein (190 aa).

This sequence belongs to the elongation factor P family.

This chain is Elongation factor P-like protein, found in Yersinia enterocolitica serotype O:8 / biotype 1B (strain NCTC 13174 / 8081).